The primary structure comprises 166 residues: Heavy metal-associated isoprenylated plant protein 45 (166 aa).

Residues 15-78 form the HMA domain; it reads LSIVELLVDM…MVKRTGRTAE (64 aa). 2 residues coordinate a metal cation: Cys-26 and Cys-29. The residue at position 163 (Cys-163) is a Cysteine methyl ester. Cys-163 is lipidated: S-farnesyl cysteine. Residues 164-166 constitute a propeptide, removed in mature form; that stretch reads TIM.

This sequence belongs to the HIPP family.

Functionally, heavy-metal-binding protein. This chain is Heavy metal-associated isoprenylated plant protein 45, found in Arabidopsis thaliana (Mouse-ear cress).